The following is a 240-amino-acid chain: MTESERRTVEELQKRLGVLFNDEELLFRALCHSSYANEQKQAGREDVESNEKLEFLGDAVLELFVCEILYRKYPEAEVGDLARVKSAVASEEVLARVSRRLELGKYLFLGKGEEKTGGRERDSILADAFEALLAALYLDQGYQKIKDLFEDEFESYIEKIMKGEILFDYKTALQEIVQREHKTPPEYVLVRTEKNGSEKLFVVEVRVNDETLAVGRGRTKKEAEKDAARKAYEKLVAEKT.

The RNase III domain occupies 9–141 (VEELQKRLGV…LLAALYLDQG (133 aa)). Glu-54 serves as a coordination point for Mg(2+). The active site involves Asp-58. Mg(2+) is bound by residues Asp-127 and Glu-130. Glu-130 is a catalytic residue. The DRBM domain occupies 168-237 (DYKTALQEIV…ARKAYEKLVA (70 aa)).

This sequence belongs to the ribonuclease III family. Homodimer. Requires Mg(2+) as cofactor.

The protein localises to the cytoplasm. It catalyses the reaction Endonucleolytic cleavage to 5'-phosphomonoester.. Digests double-stranded RNA. Involved in the processing of primary rRNA transcript to yield the immediate precursors to the large and small rRNAs (23S and 16S). Processes some mRNAs, and tRNAs when they are encoded in the rRNA operon. Processes pre-crRNA and tracrRNA of type II CRISPR loci if present in the organism. The sequence is that of Ribonuclease 3 from Thermotoga neapolitana (strain ATCC 49049 / DSM 4359 / NBRC 107923 / NS-E).